Reading from the N-terminus, the 205-residue chain is Methylthioribulose-1-phosphate dehydratase (205 aa).

Residues His96 and His98 each coordinate Zn(2+).

It belongs to the aldolase class II family. MtnB subfamily. It depends on Zn(2+) as a cofactor.

It catalyses the reaction 5-(methylsulfanyl)-D-ribulose 1-phosphate = 5-methylsulfanyl-2,3-dioxopentyl phosphate + H2O. It functions in the pathway amino-acid biosynthesis; L-methionine biosynthesis via salvage pathway; L-methionine from S-methyl-5-thio-alpha-D-ribose 1-phosphate: step 2/6. Functionally, catalyzes the dehydration of methylthioribulose-1-phosphate (MTRu-1-P) into 2,3-diketo-5-methylthiopentyl-1-phosphate (DK-MTP-1-P). The chain is Methylthioribulose-1-phosphate dehydratase from Pseudomonas aeruginosa (strain UCBPP-PA14).